Reading from the N-terminus, the 234-residue chain is Demethylmenaquinone methyltransferase (234 aa).

S-adenosyl-L-methionine is bound by residues Thr-58, Asp-79, and 106–107; that span reads NA.

It belongs to the class I-like SAM-binding methyltransferase superfamily. MenG/UbiE family.

It carries out the reaction a 2-demethylmenaquinol + S-adenosyl-L-methionine = a menaquinol + S-adenosyl-L-homocysteine + H(+). It participates in quinol/quinone metabolism; menaquinone biosynthesis; menaquinol from 1,4-dihydroxy-2-naphthoate: step 2/2. Its function is as follows. Methyltransferase required for the conversion of demethylmenaquinol (DMKH2) to menaquinol (MKH2). The sequence is that of Demethylmenaquinone methyltransferase from Geobacillus stearothermophilus (Bacillus stearothermophilus).